The following is a 467-amino-acid chain: Argininosuccinate lyase (467 aa).

It belongs to the lyase 1 family. Argininosuccinate lyase subfamily.

The protein resides in the cytoplasm. The catalysed reaction is 2-(N(omega)-L-arginino)succinate = fumarate + L-arginine. It participates in amino-acid biosynthesis; L-arginine biosynthesis; L-arginine from L-ornithine and carbamoyl phosphate: step 3/3. This Nitrosococcus oceani (strain ATCC 19707 / BCRC 17464 / JCM 30415 / NCIMB 11848 / C-107) protein is Argininosuccinate lyase.